A 226-amino-acid polypeptide reads, in one-letter code: Lipoprotein-releasing system ATP-binding protein LolD (226 aa).

The ABC transporter domain occupies 5–226 (LKATNINKIY…LLRNGHWENY (222 aa)). 41–48 (GTSGSGKS) provides a ligand contact to ATP.

Belongs to the ABC transporter superfamily. Lipoprotein translocase (TC 3.A.1.125) family. In terms of assembly, the complex is composed of two ATP-binding proteins (LolD) and two transmembrane proteins (LolC and LolE).

The protein localises to the cell inner membrane. In terms of biological role, part of the ABC transporter complex LolCDE involved in the translocation of mature outer membrane-directed lipoproteins, from the inner membrane to the periplasmic chaperone, LolA. Responsible for the formation of the LolA-lipoprotein complex in an ATP-dependent manner. The protein is Lipoprotein-releasing system ATP-binding protein LolD of Psychrobacter arcticus (strain DSM 17307 / VKM B-2377 / 273-4).